A 359-amino-acid polypeptide reads, in one-letter code: Probable RNA methyltransferase RPD_2859 (359 aa).

Glutamate 99 serves as the catalytic Proton acceptor. A Radical SAM core domain is found at 105–330 (RFDGHTACIS…PVVVRDTQGR (226 aa)). Cysteine 112 and cysteine 336 form a disulfide bridge. Residues cysteine 119, cysteine 123, and cysteine 126 each coordinate [4Fe-4S] cluster. S-adenosyl-L-methionine contacts are provided by residues 162 to 163 (GE), serine 194, 217 to 219 (SLH), and asparagine 293. The active-site S-methylcysteine intermediate is cysteine 336.

Belongs to the radical SAM superfamily. RlmN family. [4Fe-4S] cluster is required as a cofactor.

The protein localises to the cytoplasm. In Rhodopseudomonas palustris (strain BisB5), this protein is Probable RNA methyltransferase RPD_2859.